We begin with the raw amino-acid sequence, 477 residues long: Bifunctional protein HldE (477 aa).

The tract at residues M1 to T318 is ribokinase. K179 carries the post-translational modification N6-acetyllysine. N195–E198 contributes to the ATP binding site. D264 is a catalytic residue. The tract at residues M344–G477 is cytidylyltransferase.

It in the N-terminal section; belongs to the carbohydrate kinase PfkB family. The protein in the C-terminal section; belongs to the cytidylyltransferase family. Homodimer.

It catalyses the reaction D-glycero-beta-D-manno-heptose 7-phosphate + ATP = D-glycero-beta-D-manno-heptose 1,7-bisphosphate + ADP + H(+). It carries out the reaction D-glycero-beta-D-manno-heptose 1-phosphate + ATP + H(+) = ADP-D-glycero-beta-D-manno-heptose + diphosphate. Its pathway is nucleotide-sugar biosynthesis; ADP-L-glycero-beta-D-manno-heptose biosynthesis; ADP-L-glycero-beta-D-manno-heptose from D-glycero-beta-D-manno-heptose 7-phosphate: step 1/4. The protein operates within nucleotide-sugar biosynthesis; ADP-L-glycero-beta-D-manno-heptose biosynthesis; ADP-L-glycero-beta-D-manno-heptose from D-glycero-beta-D-manno-heptose 7-phosphate: step 3/4. It functions in the pathway bacterial outer membrane biogenesis; LPS core biosynthesis. Catalyzes the phosphorylation of D-glycero-D-manno-heptose 7-phosphate at the C-1 position to selectively form D-glycero-beta-D-manno-heptose-1,7-bisphosphate. Its function is as follows. Catalyzes the ADP transfer from ATP to D-glycero-beta-D-manno-heptose 1-phosphate, yielding ADP-D-glycero-beta-D-manno-heptose. The protein is Bifunctional protein HldE of Escherichia coli O157:H7.